The primary structure comprises 154 residues: 3-hydroxyacyl-[acyl-carrier-protein] dehydratase FabZ (154 aa).

The active site involves H54.

This sequence belongs to the thioester dehydratase family. FabZ subfamily.

It localises to the cytoplasm. It catalyses the reaction a (3R)-hydroxyacyl-[ACP] = a (2E)-enoyl-[ACP] + H2O. Functionally, involved in unsaturated fatty acids biosynthesis. Catalyzes the dehydration of short chain beta-hydroxyacyl-ACPs and long chain saturated and unsaturated beta-hydroxyacyl-ACPs. The chain is 3-hydroxyacyl-[acyl-carrier-protein] dehydratase FabZ from Chlamydia abortus (strain DSM 27085 / S26/3) (Chlamydophila abortus).